Consider the following 99-residue polypeptide: ATP synthase subunit c (99 aa).

Helical transmembrane passes span 23 to 43 (GAGIGYGLVAVGAGLAMIGAL) and 78 to 98 (MGIAETAAIYSLIIAILLIFV).

Belongs to the ATPase C chain family. In terms of assembly, F-type ATPases have 2 components, F(1) - the catalytic core - and F(0) - the membrane proton channel. F(1) has five subunits: alpha(3), beta(3), gamma(1), delta(1), epsilon(1). F(0) has three main subunits: a(1), b(2) and c(10-14). The alpha and beta chains form an alternating ring which encloses part of the gamma chain. F(1) is attached to F(0) by a central stalk formed by the gamma and epsilon chains, while a peripheral stalk is formed by the delta and b chains.

The protein resides in the cell membrane. In terms of biological role, f(1)F(0) ATP synthase produces ATP from ADP in the presence of a proton or sodium gradient. F-type ATPases consist of two structural domains, F(1) containing the extramembraneous catalytic core and F(0) containing the membrane proton channel, linked together by a central stalk and a peripheral stalk. During catalysis, ATP synthesis in the catalytic domain of F(1) is coupled via a rotary mechanism of the central stalk subunits to proton translocation. Key component of the F(0) channel; it plays a direct role in translocation across the membrane. A homomeric c-ring of between 10-14 subunits forms the central stalk rotor element with the F(1) delta and epsilon subunits. This Mycoplasma mobile (strain ATCC 43663 / 163K / NCTC 11711) (Mesomycoplasma mobile) protein is ATP synthase subunit c.